The sequence spans 49 residues: Large ribosomal subunit protein bL33 (49 aa).

Belongs to the bacterial ribosomal protein bL33 family.

This chain is Large ribosomal subunit protein bL33, found in Lactiplantibacillus plantarum (strain ATCC BAA-793 / NCIMB 8826 / WCFS1) (Lactobacillus plantarum).